The following is a 288-amino-acid chain: Alpha/beta hydrolase domain-containing protein 17B (288 aa).

Catalysis depends on charge relay system residues Ser170, Asp235, and His264.

Belongs to the AB hydrolase superfamily. ABHD17 family. Palmitoylated on cysteine residues located in a cysteine cluster at the N-terminus which promotes membrane localization.

The protein resides in the cell membrane. The protein localises to the recycling endosome membrane. It localises to the cell projection. Its subcellular location is the dendritic spine. It is found in the postsynaptic density membrane. It carries out the reaction S-hexadecanoyl-L-cysteinyl-[protein] + H2O = L-cysteinyl-[protein] + hexadecanoate + H(+). Functionally, hydrolyzes fatty acids from S-acylated cysteine residues in proteins. The chain is Alpha/beta hydrolase domain-containing protein 17B from Xenopus tropicalis (Western clawed frog).